Here is a 242-residue protein sequence, read N- to C-terminus: UPF0273 protein MJ1359 (242 aa).

The 241-residue stretch at K2 to R242 folds into the KaiC domain. An ATP-binding site is contributed by G29–S36.

The protein belongs to the UPF0273 family.

The sequence is that of UPF0273 protein MJ1359 from Methanocaldococcus jannaschii (strain ATCC 43067 / DSM 2661 / JAL-1 / JCM 10045 / NBRC 100440) (Methanococcus jannaschii).